Here is a 415-residue protein sequence, read N- to C-terminus: Adenosylhomocysteinase (415 aa).

Positions 53, 124, and 147 each coordinate substrate. 148 to 150 (TTT) serves as a coordination point for NAD(+). Lys-177 and Asp-181 together coordinate substrate. NAD(+) contacts are provided by residues Asn-182, 211–216 (GYGWVG), Glu-234, Asn-269, 290–292 (SGH), and Asn-337.

This sequence belongs to the adenosylhomocysteinase family. NAD(+) is required as a cofactor.

It localises to the cytoplasm. It carries out the reaction S-adenosyl-L-homocysteine + H2O = L-homocysteine + adenosine. Its pathway is amino-acid biosynthesis; L-homocysteine biosynthesis; L-homocysteine from S-adenosyl-L-homocysteine: step 1/1. Its function is as follows. May play a key role in the regulation of the intracellular concentration of adenosylhomocysteine. The protein is Adenosylhomocysteinase of Sulfurisphaera tokodaii (strain DSM 16993 / JCM 10545 / NBRC 100140 / 7) (Sulfolobus tokodaii).